Here is a 344-residue protein sequence, read N- to C-terminus: Uroporphyrinogen decarboxylase (344 aa).

Substrate is bound by residues 26–30 (RQAGR), Asp75, Tyr150, Ser205, and His323.

It belongs to the uroporphyrinogen decarboxylase family. Homodimer.

It is found in the cytoplasm. The catalysed reaction is uroporphyrinogen III + 4 H(+) = coproporphyrinogen III + 4 CO2. Its pathway is porphyrin-containing compound metabolism; protoporphyrin-IX biosynthesis; coproporphyrinogen-III from 5-aminolevulinate: step 4/4. In terms of biological role, catalyzes the decarboxylation of four acetate groups of uroporphyrinogen-III to yield coproporphyrinogen-III. The chain is Uroporphyrinogen decarboxylase from Corynebacterium diphtheriae (strain ATCC 700971 / NCTC 13129 / Biotype gravis).